A 181-amino-acid chain; its full sequence is Cytidylate kinase (181 aa).

12 to 20 (GLAGSGTTT) provides a ligand contact to ATP.

It belongs to the cytidylate kinase family. Type 2 subfamily.

The protein resides in the cytoplasm. The enzyme catalyses CMP + ATP = CDP + ADP. The catalysed reaction is dCMP + ATP = dCDP + ADP. The protein is Cytidylate kinase (cmk) of Pyrococcus abyssi (strain GE5 / Orsay).